Here is a 2126-residue protein sequence, read N- to C-terminus: Polycystin family receptor for egg jelly (2126 aa).

A signal peptide spans 1 to 18; the sequence is MWPGPALLLLGLGLGLGS. The Extracellular portion of the chain corresponds to 19–1068; it reads QPPPTGPRGL…AIISNLTQNP (1050 aa). The segment at 20-71 is disordered; sequence PPPTGPRGLPGVLRGAPGLGQGAESSVRGGDTGGLSPRAAPRHASPTPPRRC. Asparagine 84, asparagine 94, asparagine 129, asparagine 192, asparagine 243, asparagine 325, asparagine 571, asparagine 761, asparagine 774, asparagine 807, asparagine 849, asparagine 888, asparagine 960, and asparagine 1063 each carry an N-linked (GlcNAc...) asparagine glycan. The region spanning 102 to 797 is the REJ domain; it reads CIMQPVKINR…SMMFCEFADD (696 aa). A helical membrane pass occupies residues 1069–1089; the sequence is ATFLAVLFIMILYAILAFWAL. Over 1090–1273 the chain is Cytoplasmic; sequence HRDVIDLYFR…VPKPFNRLQR (184 aa). Residues 1114–1231 form the PLAT domain; the sequence is LCYLVTIFTG…TLDATFSVTN (118 aa). The chain crosses the membrane as a helical span at residues 1274 to 1294; the sequence is LSCCLAMLLSSLVCNIMFFNL. Residues 1295-1311 lie on the Extracellular side of the membrane; sequence NQKEKIESRHMHIIRSM. A helical transmembrane segment spans residues 1312–1332; it reads LIGIESVVITIPVQLLITFFF. Topologically, residues 1333–1449 are cytoplasmic; that stretch reads TYSQKNLKMN…KTQIILPRWC (117 aa). The interval 1379–1431 is disordered; sequence RAAVSTSAPEEKEAFETSQKHEKADTQMSNKNSSNNNQEASEGVPPKAFSSQP. Basic and acidic residues predominate over residues 1387-1403; that stretch reads PEEKEAFETSQKHEKAD. The chain crosses the membrane as a helical span at residues 1450–1470; that stretch reads VYIAWFLVFATSGISSFFIVF. The Extracellular portion of the chain corresponds to 1471–1483; sequence YGVTYGYAKSIEW. The chain crosses the membrane as a helical span at residues 1484-1504; it reads LFASFCSFCQSVFLVQPCNIL. Over 1505 to 1580 the chain is Cytoplasmic; sequence LRSGTRSYKP…RRENRIRRRS (76 aa). The helical transmembrane segment at 1581 to 1601 threads the bilayer; the sequence is FLFLSYLVTHFIFLTLLLLLI. Over 1602 to 1838 the chain is Extracellular; it reads FSLRHNDSFY…DFNRKTSSEI (237 aa). N-linked (GlcNAc...) asparagine glycosylation is found at asparagine 1607, asparagine 1676, asparagine 1766, and asparagine 1817. A helical transmembrane segment spans residues 1839–1859; it reads YLYAAILIFFCAYVVDEGYII. Residues 1860–1875 are Cytoplasmic-facing; it reads RQERASYIRSVYNLLN. The chain crosses the membrane as a helical span at residues 1876–1896; sequence FSLKCMFALLIVLFFWKYFLA. At 1897 to 1918 the chain is on the extracellular side; that stretch reads TKMVQLYLADPEAFIPFHAVSR. Residues 1919–1939 traverse the membrane as a helical segment; that stretch reads VDHFMRIILAFLLFLTILKTL. Residues 1940-1964 are Cytoplasmic-facing; sequence RYSRFFYNVRLAQKAIQAALPGICH. The chain crosses the membrane as a helical span at residues 1965-1985; that stretch reads TALVVSIYSFMYVAFGYLVFG. Topologically, residues 1986–2019 are extracellular; it reads QHEWNYSNMIHATQTIFSYCVSAFQNTEFSGNKV. Residues 2020–2040 form a helical membrane-spanning segment; sequence LGVLFLSSFMLVMICIFINLF. Residues 2041–2126 are Cytoplasmic-facing; sequence QAVILSAYDE…NGKKMIYLVV (86 aa).

The protein belongs to the polycystin family. Exclusively expressed in testis.

The protein resides in the cell membrane. It localises to the cytoplasmic vesicle. It is found in the secretory vesicle. The protein localises to the acrosome membrane. Its subcellular location is the nucleus. Testis-specific protein that controls sperm transport and the timing of zona pellucida-evoked exocytosis of the sperm acrosome. The chain is Polycystin family receptor for egg jelly (Pkdrej) from Mus musculus (Mouse).